The following is a 276-amino-acid chain: NH(3)-dependent NAD(+) synthetase (276 aa).

ATP is bound at residue 43 to 50; it reads GISGGVDS. Asp49 is a binding site for Mg(2+). Arg146 is a binding site for deamido-NAD(+). ATP is bound at residue Thr166. Glu171 is a Mg(2+) binding site. Positions 179 and 186 each coordinate deamido-NAD(+). Positions 195 and 217 each coordinate ATP. 266–267 provides a ligand contact to deamido-NAD(+); that stretch reads HK.

The protein belongs to the NAD synthetase family. As to quaternary structure, homodimer.

It carries out the reaction deamido-NAD(+) + NH4(+) + ATP = AMP + diphosphate + NAD(+) + H(+). It participates in cofactor biosynthesis; NAD(+) biosynthesis; NAD(+) from deamido-NAD(+) (ammonia route): step 1/1. Its function is as follows. Catalyzes the ATP-dependent amidation of deamido-NAD to form NAD. Uses ammonia as a nitrogen source. This chain is NH(3)-dependent NAD(+) synthetase, found in Vibrio atlanticus (strain LGP32) (Vibrio splendidus (strain Mel32)).